The sequence spans 65 residues: Lantipeptide Flvbeta.h (65 aa).

Residues 1–27 (MERYGHLAGVIPVDEIDDMFESNVIGG) constitute a propeptide, cleaved by FlvT. T28 carries the 2,3-didehydrobutyrine; by FlvM2 modification. The lanthionine (Ser-Cys); by FlvM2 cross-link spans 29 to 33 (SSIDC). Position 30 is a 2,3-didehydroalanine (Ser); by FlvM2 (S30). T44 bears the 2,3-didehydrobutyrine; by FlvM2 mark. The beta-methyllanthionine (Thr-Cys); by FlvM2 cross-link spans 48–54 (TVRIEFC). Positions 56 to 59 (SAAC) form a cross-link, lanthionine (Ser-Cys); by FlvM2. The beta-methyllanthionine (Thr-Cys); by FlvM2 cross-link spans 60 to 63 (TYSC).

Contains LL-lanthionine, DL-lanthionine, and DL-beta-methyllanthionine, when coepressed in E.coli with the flavecin synthetase FlvM2.

The protein resides in the secreted. In terms of biological role, lanthionine-containing peptide that does probably not show antibacterial activity, since its analog [+2]Flvbeta.h does not show antibacterial activity against M.luteus. Also does not show antibiotic activity when tested with [Del2]Flvalpha.a, an analog of Flvalpha.a, which is encoded by the same operon than Flvbeta.h. The bactericidal activity of lantibiotics is based on depolarization of energized bacterial cytoplasmic membranes, initiated by the formation of aqueous transmembrane pores. This is Lantipeptide Flvbeta.h from Ruminococcus flavefaciens.